Consider the following 592-residue polypeptide: Ichor (592 aa).

Residues 114–123 (NNNYMQSAYH) show a composition bias toward polar residues. Disordered regions lie at residues 114–156 (NNNY…VSSS), 343–377 (LQNRLQNGPPNGNSSGGGGGANQGAGIKGDPQAPT), 416–439 (LSNPTNNQATGNLHQQGGYSMQAS), and 459–527 (HTTT…DLSG). A compositionally biased stretch (low complexity) spans 124–148 (PQNQSNPTSTTQSNGGSNSNSNNSN). Residues 356-369 (SSGGGGGANQGAGI) are compositionally biased toward gly residues. Polar residues predominate over residues 459-469 (HTTTASTTGSE). The segment covering 488-500 (QQQQQQQQQQQQQ) has biased composition (low complexity). Positions 507–524 (PTTPQMSAISPSGFSASD) are enriched in polar residues. 2 consecutive C2H2-type zinc fingers follow at residues 536–558 (HRCSICNRGFLNKSNIKVHLRTH) and 564–586 (FRCDVCAKAFRQKAHLLKHQQIH).

It localises to the nucleus. Functionally, transcriptional activator. In tracheal terminal cells, regulates the transcription of factors involved in the formation of a mature apical extracellular matrix (aECM) which is essential for the integrity and shape of seamless tubes. This Drosophila melanogaster (Fruit fly) protein is Ichor.